Here is a 312-residue protein sequence, read N- to C-terminus: DNA-directed RNA polymerase subunit alpha (312 aa).

Residues 1–226 (MIEFEKPNIT…EHLDIFVNLT (226 aa)) are alpha N-terminal domain (alpha-NTD). Residues 243–312 (KEKMLEMTIE…DLGLGLRKED (70 aa)) form an alpha C-terminal domain (alpha-CTD) region.

Belongs to the RNA polymerase alpha chain family. As to quaternary structure, homodimer. The RNAP catalytic core consists of 2 alpha, 1 beta, 1 beta' and 1 omega subunit. When a sigma factor is associated with the core the holoenzyme is formed, which can initiate transcription.

It carries out the reaction RNA(n) + a ribonucleoside 5'-triphosphate = RNA(n+1) + diphosphate. In terms of biological role, DNA-dependent RNA polymerase catalyzes the transcription of DNA into RNA using the four ribonucleoside triphosphates as substrates. This chain is DNA-directed RNA polymerase subunit alpha, found in Lacticaseibacillus casei (strain BL23) (Lactobacillus casei).